Consider the following 723-residue polypeptide: Nucleolar protein 11 (723 aa).

It localises to the nucleus. The protein resides in the nucleolus. Its function is as follows. Ribosome biogenesis factor. May be required for both optimal rDNA transcription and pre-rRNA processing. The chain is Nucleolar protein 11 (NOL11) from Gallus gallus (Chicken).